The sequence spans 553 residues: Hydroxylamine reductase (553 aa).

Residues Cys3, Cys6, Cys18, and Cys25 each coordinate [2Fe-2S] cluster. Residues His252, Glu276, Cys320, Cys408, Cys436, Cys461, Glu495, and Lys497 each contribute to the hybrid [4Fe-2O-2S] cluster site. Cys408 is subject to Cysteine persulfide.

It belongs to the HCP family. The cofactor is [2Fe-2S] cluster. Hybrid [4Fe-2O-2S] cluster is required as a cofactor.

The protein resides in the cytoplasm. It carries out the reaction A + NH4(+) + H2O = hydroxylamine + AH2 + H(+). Its function is as follows. Catalyzes the reduction of hydroxylamine to form NH(3) and H(2)O. In Aliivibrio fischeri (strain ATCC 700601 / ES114) (Vibrio fischeri), this protein is Hydroxylamine reductase.